The following is an 804-amino-acid chain: Leucine--tRNA ligase (804 aa).

Positions P40–H51 match the 'HIGH' region motif. The short motif at K576–S580 is the 'KMSKS' region element. K579 is an ATP binding site.

This sequence belongs to the class-I aminoacyl-tRNA synthetase family.

It localises to the cytoplasm. It catalyses the reaction tRNA(Leu) + L-leucine + ATP = L-leucyl-tRNA(Leu) + AMP + diphosphate. This chain is Leucine--tRNA ligase, found in Staphylococcus aureus (strain bovine RF122 / ET3-1).